The sequence spans 822 residues: Endonuclease MutS2 (822 aa).

Residue 348 to 355 (GPNTGGKT) coordinates ATP. A disordered region spans residues 707–737 (SLNGKKVEPPPKSEPVPKKVKAEPPATEAKS). Positions 709–728 (NGKKVEPPPKSEPVPKKVKA) are enriched in basic and acidic residues. The Smr domain maps to 749–822 (LDCRGDRLER…GAGVTIAYLR (74 aa)).

It belongs to the DNA mismatch repair MutS family. MutS2 subfamily. In terms of assembly, homodimer. Binds to stalled ribosomes, contacting rRNA.

Functionally, endonuclease that is involved in the suppression of homologous recombination and thus may have a key role in the control of bacterial genetic diversity. Its function is as follows. Acts as a ribosome collision sensor, splitting the ribosome into its 2 subunits. Detects stalled/collided 70S ribosomes which it binds and splits by an ATP-hydrolysis driven conformational change. Acts upstream of the ribosome quality control system (RQC), a ribosome-associated complex that mediates the extraction of incompletely synthesized nascent chains from stalled ribosomes and their subsequent degradation. Probably generates substrates for RQC. The polypeptide is Endonuclease MutS2 (Synechocystis sp. (strain ATCC 27184 / PCC 6803 / Kazusa)).